The primary structure comprises 414 residues: NADH kinase POS5, mitochondrial (414 aa).

It belongs to the NAD kinase family.

The protein localises to the mitochondrion matrix. It catalyses the reaction NADH + ATP = ADP + NADPH + H(+). Its function is as follows. Phosphorylates both NADH and NAD(+), with a twofold preference for NADH. Anti-oxidant factor and key source of the cellular reductant NADPH. This chain is NADH kinase POS5, mitochondrial (POS5), found in Saccharomyces cerevisiae (strain ATCC 204508 / S288c) (Baker's yeast).